Reading from the N-terminus, the 483-residue chain is Acyl-coenzyme A thioesterase 2, mitochondrial (483 aa).

An N6-acetyllysine modification is found at lysine 104. Active-site charge relay system residues include serine 294, aspartate 388, and histidine 422. Lysine 470 carries the post-translational modification N6-succinyllysine. The short motif at 481 to 483 (SKV) is the Microbody targeting signal element.

This sequence belongs to the C/M/P thioester hydrolase family. In terms of assembly, monomer. Strongest expression in heart, liver, muscle and kidney. Weak in placenta and pancreas.

It is found in the mitochondrion. The enzyme catalyses hexadecanoyl-CoA + H2O = hexadecanoate + CoA + H(+). The catalysed reaction is tetradecanoyl-CoA + H2O = tetradecanoate + CoA + H(+). It catalyses the reaction octadecanoyl-CoA + H2O = octadecanoate + CoA + H(+). It carries out the reaction eicosanoyl-CoA + H2O = eicosanoate + CoA + H(+). The enzyme catalyses decanoyl-CoA + H2O = decanoate + CoA + H(+). The catalysed reaction is dodecanoyl-CoA + H2O = dodecanoate + CoA + H(+). It catalyses the reaction (9Z)-octadecenoyl-CoA + H2O = (9Z)-octadecenoate + CoA + H(+). It carries out the reaction (9Z)-hexadecenoyl-CoA + H2O = (9Z)-hexadecenoate + CoA + H(+). The enzyme catalyses (9E)-octadecenoyl-CoA + H2O = (9E)-octadecenoate + CoA + H(+). The catalysed reaction is (9Z,12Z)-octadecadienoyl-CoA + H2O = (9Z,12Z)-octadecadienoate + CoA + H(+). Its pathway is lipid metabolism; fatty acid metabolism. Functionally, catalyzes the hydrolysis of acyl-CoAs into free fatty acids and coenzyme A (CoASH), regulating their respective intracellular levels. Displays higher activity toward long chain acyl CoAs (C14-C20). The enzyme is involved in enhancing the hepatic fatty acid oxidation in mitochondria. The polypeptide is Acyl-coenzyme A thioesterase 2, mitochondrial (ACOT2) (Homo sapiens (Human)).